We begin with the raw amino-acid sequence, 103 residues long: Large ribosomal subunit protein bL21 (103 aa).

This sequence belongs to the bacterial ribosomal protein bL21 family. Part of the 50S ribosomal subunit. Contacts protein L20.

In terms of biological role, this protein binds to 23S rRNA in the presence of protein L20. The chain is Large ribosomal subunit protein bL21 from Nocardia farcinica (strain IFM 10152).